Consider the following 274-residue polypeptide: Elongation factor Ts (274 aa).

An involved in Mg(2+) ion dislocation from EF-Tu region spans residues 76–79 (TDFV).

This sequence belongs to the EF-Ts family.

The protein localises to the cytoplasm. Functionally, associates with the EF-Tu.GDP complex and induces the exchange of GDP to GTP. It remains bound to the aminoacyl-tRNA.EF-Tu.GTP complex up to the GTP hydrolysis stage on the ribosome. This chain is Elongation factor Ts, found in Mycobacterium sp. (strain JLS).